We begin with the raw amino-acid sequence, 61 residues long: Bacteriocin leucocin-B (61 aa).

The propeptide occupies 1-24 (MNNMKSADNYQQLDNNALEQVVGG). Cys33 and Cys38 form a disulfide bridge.

The protein belongs to the bacteriocin class IIA/YGNGV family.

It is found in the secreted. Active against L.monocytogenes and several lactic acid bacteria. This Leuconostoc carnosum protein is Bacteriocin leucocin-B.